The following is a 367-amino-acid chain: Aminomethyltransferase (367 aa).

The protein belongs to the GcvT family. In terms of assembly, the glycine cleavage system is composed of four proteins: P, T, L and H.

It carries out the reaction N(6)-[(R)-S(8)-aminomethyldihydrolipoyl]-L-lysyl-[protein] + (6S)-5,6,7,8-tetrahydrofolate = N(6)-[(R)-dihydrolipoyl]-L-lysyl-[protein] + (6R)-5,10-methylene-5,6,7,8-tetrahydrofolate + NH4(+). In terms of biological role, the glycine cleavage system catalyzes the degradation of glycine. The chain is Aminomethyltransferase from Mycobacterium avium (strain 104).